Here is a 165-residue protein sequence, read N- to C-terminus: Protein YELLOW LEAF 1, choloroplastic (165 aa).

Residues 1–51 (MPPLATMSSPGSLLLLTPAVYQGIGRNRGGQSQEGQSISSSRSLKTKLSVS) constitute a chloroplast transit peptide. Residues 71–118 (TQTARRKSFSGPTSPPSGSVKEKVRSPKLDDGGTGFPPFRFGGGGGGG) are disordered. The segment covering 79 to 89 (FSGPTSPPSGS) has biased composition (low complexity). Over residues 90-101 (VKEKVRSPKLDD) the composition is skewed to basic and acidic residues.

In terms of assembly, interacts with atpB. In terms of tissue distribution, highly expressed in leaves. Expressed in leaf sheaths. Expressed at low levels in stems.

The protein localises to the plastid. It localises to the chloroplast. Functionally, required for photosynthetic protein complex assembly in chloroplast thylakoid membranes during leaf development. Maintains the abundance of the core protein complex PsaA-PsaB of photosystem I (PSI) in the thylakoid membrane. May play a role in the efficient biogenesis of the chloroplast ATP synthase complex, possibly by interacting with the beta subunit atpB. In Oryza sativa subsp. japonica (Rice), this protein is Protein YELLOW LEAF 1, choloroplastic.